A 231-amino-acid chain; its full sequence is Large ribosomal subunit protein uL1 (231 aa).

The protein belongs to the universal ribosomal protein uL1 family. Part of the 50S ribosomal subunit.

Its function is as follows. Binds directly to 23S rRNA. The L1 stalk is quite mobile in the ribosome, and is involved in E site tRNA release. Functionally, protein L1 is also a translational repressor protein, it controls the translation of the L11 operon by binding to its mRNA. This Halorhodospira halophila (strain DSM 244 / SL1) (Ectothiorhodospira halophila (strain DSM 244 / SL1)) protein is Large ribosomal subunit protein uL1.